We begin with the raw amino-acid sequence, 75 residues long: MSKRFKFDSSEMIYLTDKLMNAASNRYSIVVQVARRAKRVRYDTVENIDDPMIKPVQRALMEMTDELTEPELLRD.

Belongs to the RNA polymerase subunit omega family. As to quaternary structure, in cyanobacteria the RNAP catalytic core is composed of 2 alpha, 1 beta, 1 beta', 1 gamma and 1 omega subunit. When a sigma factor is associated with the core the holoenzyme is formed, which can initiate transcription.

The catalysed reaction is RNA(n) + a ribonucleoside 5'-triphosphate = RNA(n+1) + diphosphate. Functionally, promotes RNA polymerase assembly. Latches the N- and C-terminal regions of the beta' subunit thereby facilitating its interaction with the beta and alpha subunits. This is DNA-directed RNA polymerase subunit omega from Microcystis aeruginosa (strain NIES-843 / IAM M-2473).